Consider the following 153-residue polypeptide: MKTFVLHIFIFALVAFASASRDSAKKIGSQYDNFETCLTEHGLTEDDVFSIGEVSSGQHKTNHEDTELHKNGCVMQCMLEKDGLMSGADYDEEKMREDYIKETGAQPGDQRIEALNACMQETKDMEDKCDKSLILVACVLAAEAILADSSEAA.

The first 19 residues, Met1 to Ala19, serve as a signal peptide directing secretion. 3 cysteine pairs are disulfide-bonded: Cys37–Cys77, Cys73–Cys129, and Cys118–Cys138.

This sequence belongs to the PBP/GOBP family. As to quaternary structure, homodimer.

The protein localises to the secreted. Its function is as follows. Colony queen number, a major feature of social organization, is associated with worker genotype for Gp-9. Colonies are headed by either a single reproductive queen (monogyne form) or multiple queens (polygyne form). Differences in worker Gp-9 genotypes between social forms may cause differences in workers' abilities to recognize queens and regulate their numbers. This Solenopsis pusillignis (Fire ant) protein is Pheromone-binding protein Gp-9.